The following is a 98-amino-acid chain: Integration host factor subunit beta (98 aa).

Belongs to the bacterial histone-like protein family. Heterodimer of an alpha and a beta chain.

Its function is as follows. This protein is one of the two subunits of integration host factor, a specific DNA-binding protein that functions in genetic recombination as well as in transcriptional and translational control. This is Integration host factor subunit beta from Gluconacetobacter diazotrophicus (strain ATCC 49037 / DSM 5601 / CCUG 37298 / CIP 103539 / LMG 7603 / PAl5).